The primary structure comprises 498 residues: L-amino acid oxidase Cdc18 (498 aa).

The signal sequence occupies residues Ser-1 to Cys-2. A disulfide bridge connects residues Cys-12 and Cys-173. FAD contacts are provided by residues Met-45–Ala-46, Glu-65–Ala-66, Arg-73, and Gly-87–Arg-90. Positions 90 and 223 each coordinate substrate. Residue Val-263 participates in FAD binding. Residues Cys-333 and Cys-414 are joined by a disulfide bond. An N-linked (GlcNAc...) asparagine glycan is attached at Asn-363. Residue Tyr-374 coordinates substrate. Residues Glu-459 and Gly-466–Thr-471 each bind FAD. Gly-466–Trp-467 serves as a coordination point for substrate.

It belongs to the flavin monoamine oxidase family. FIG1 subfamily. In terms of assembly, monomer. This is in contrast with most of its orthologs, that are non-covalently linked homodimers. The cofactor is FAD. As to expression, expressed by the venom gland.

It localises to the secreted. The enzyme catalyses an L-alpha-amino acid + O2 + H2O = a 2-oxocarboxylate + H2O2 + NH4(+). It catalyses the reaction L-leucine + O2 + H2O = 4-methyl-2-oxopentanoate + H2O2 + NH4(+). Functionally, catalyzes an oxidative deamination of predominantly hydrophobic and aromatic L-amino acids, thus producing hydrogen peroxide that may contribute to the diverse toxic effects of this enzyme. Shows activity on L-Leu. Damages cell membranes of the Gram-positive bacteria S.aureus (MIC=8 ug/ml and MBC=16 ug/ml) and the Gram-negative bacteria A.baumannii (MIC=16 ug/ml and MBC=32 ug/ml). This antimicrobial activity is dependent on the production of hydrogen peroxyde, since it is inhibited by catalase, a hydrogen peroxyde scavenger. This is L-amino acid oxidase Cdc18 from Crotalus durissus cumanensis (South American rattlesnake).